We begin with the raw amino-acid sequence, 423 residues long: CinA-like protein (423 aa).

The protein belongs to the CinA family.

The sequence is that of CinA-like protein from Chlorobium phaeobacteroides (strain DSM 266 / SMG 266 / 2430).